A 496-amino-acid polypeptide reads, in one-letter code: Nitric oxide synthase, inducible (496 aa).

Residues cysteine 6, glutamate 32, and glutamine 36 each contribute to the FMN site. The region spanning 101-341 (KNLFTMRLRS…VRSVSGFQLP (241 aa)) is the FAD-binding FR-type domain. Arginine 121 serves as a coordination point for NADP(+). FAD is bound by residues histidine 143, arginine 277, tyrosine 279, serine 280, threonine 295, and alanine 297. An NADP(+)-binding site is contributed by threonine 300. FAD contacts are provided by tyrosine 301, valine 314, cysteine 315, and serine 316. Residues threonine 355, arginine 388, serine 417, arginine 418, lysine 424, tyrosine 426, glutamine 428, and aspartate 461 each contribute to the NADP(+) site.

Belongs to the NOS family. In terms of assembly, homodimer. Interacts with NHERF1. Interacts with GAPDH; induced by oxidatively-modified low-densitity lipoprotein (LDL(ox)). Interacts with S100A8 and S100A9 to form the iNOS-S100A8/9 transnitrosylase complex. Interacts with SPSB1, SPSB2 and SPSB4. Interacts with ELOC and CUL5 in the presence of SPSB1 or SPSB2 or SPSB4. Forms a complex with ASL, ASS1 and HSP90AA1; the complex regulates cell-autonomous L-arginine synthesis and citrulline recycling while channeling extracellular L-arginine to nitric oxide synthesis pathway. The cofactor is heme b. FAD serves as cofactor. It depends on FMN as a cofactor. (6R)-L-erythro-5,6,7,8-tetrahydrobiopterin is required as a cofactor. Post-translationally, polyubiquitinated; mediated by SPSB1, SPSB2 and SPSB4, leading to proteasomal degradation.

The protein resides in the cytoplasm. Its subcellular location is the cytosol. The catalysed reaction is 2 L-arginine + 3 NADPH + 4 O2 + H(+) = 2 L-citrulline + 2 nitric oxide + 3 NADP(+) + 4 H2O. Not stimulated by calcium/calmodulin. Produces nitric oxide (NO) which is a messenger molecule with diverse functions throughout the body. In macrophages, NO mediates tumoricidal and bactericidal actions. Also has nitrosylase activity and mediates cysteine S-nitrosylation of cytoplasmic target proteins such PTGS2/COX2. As component of the iNOS-S100A8/9 transnitrosylase complex involved in the selective inflammatory stimulus-dependent S-nitrosylation of GAPDH implicated in regulation of the GAIT complex activity and probably multiple targets including ANXA5, EZR, MSN and VIM. Involved in inflammation, enhances the synthesis of pro-inflammatory mediators such as IL6 and IL8. In Oryctolagus cuniculus (Rabbit), this protein is Nitric oxide synthase, inducible (NOS2).